The following is a 501-amino-acid chain: MPPVRFGPRKILEYDGRYGVLICHECRYAIQKSALQSHLLRHKIYRADRQQLVAMINELDLLEPDDVLLPPPESPPIDGLPVIAGYRCTAPGCANLCASLKRMKGHWRESHGIADASLARPAKLQTFFRGTKIRYFEVTPTTEDEDDEENESENDEEEGDVDLEEQEDDNGGRQSTTVTTSPGPSAPSVNVDLETLSYFHHFMSATSLTLPCPQDMQSGAQYWKEKAVPQALQQRWLMCGLLALAACHLAAFPDNAAAGQQHRKRAAEFSLEFRTGWRELADTSGEGLREVATEIECLLRCAHWALAESPCDQRIMPEPGVPEHLQSIISTIQSTVPAAAPHEAETSAYATRILRWNTSEAGNSVLAEIRNRLHDLPARMADTFGRPENIQDVLVLLSALAAMGECCDTSFASEEVGPAWWGMATWWTRVPLRFKELVARHYPASLVVVAHWAALMVNRTERCGCWLVKGLAMTILLRIAERLPEDDDGNVQRLVALTIAA.

The interval 137-189 is disordered; sequence EVTPTTEDEDDEENESENDEEEGDVDLEEQEDDNGGRQSTTVTTSPGPSAPSV. Residues 142–169 are compositionally biased toward acidic residues; that stretch reads TEDEDDEENESENDEEEGDVDLEEQEDD. Positions 172 to 183 are enriched in polar residues; that stretch reads GRQSTTVTTSPG.

Its function is as follows. Part of the gene cluster that mediates the biosynthesis of orsellinic acid, as well as of the cathepsin K inhibitors F9775 A and F9775 B. The non-reducing polyketide synthase orsA produces orsellinic acid by condensing acetyl-CoA with 3 malonyl-CoA units. Further modifications by the decarboxylase orsB and the tyrosinase-like protein orsC lead to the production of F9775 A and F9775 B. The functions of orsD and orsE remain unclear since only orsB and orsC are required to convert orsellinic acid into F9775 A and F9775 B. This is Orsellinic acid/F9775 biosynthesis cluster protein D from Emericella nidulans (strain FGSC A4 / ATCC 38163 / CBS 112.46 / NRRL 194 / M139) (Aspergillus nidulans).